The sequence spans 1254 residues: Zinc finger protein BRUTUS (1254 aa).

Residues 1 to 40 (MATPLPDFETARGGGAVASSSTTVLPSSVSSSSSSSRPLP) are disordered. Residues 19-40 (SSSTTVLPSSVSSSSSSSRPLP) are compositionally biased toward low complexity. Residues 201 to 221 (FLCSIPVNMLAVFLPWISSSI) form a helical membrane-spanning segment. Residues 893 to 913 (GSPDSSSTETSKPSPQKDNDH) form a disordered region. Positions 895-906 (PDSSSTETSKPS) are enriched in polar residues. The CHY-type zinc-finger motif lies at 999–1068 (PEKQIYGCEH…PICTTPSCDG (70 aa)). Positions 1006, 1008, 1019, 1020, 1026, 1029, 1030, 1036, 1048, 1051, 1061, 1066, 1076, 1079, 1090, 1091, 1094, 1097, 1109, 1110, 1113, 1116, 1124, and 1126 each coordinate Zn(2+). The CTCHY-type zinc finger occupies 1071–1134 (MAKHYCSICK…KCLEKSLETN (64 aa)). The segment at 1135 to 1176 (CPICCEFLFTSSEAVRALPCGHYMHSACFQAYTCSHYTCPIC) adopts an RING-type; atypical zinc-finger fold.

In terms of assembly, interacts with the PYEL proteins bHLH115, bHLH104 and ILR3 in the nucleus. Binds zinc and iron ions. Expressed in cotyledons of seedlings, young leaves, developing and mature embryos, and other reproductive tissues including floral vasculature, funiculus, septum, and gynoecium valves.

Its subcellular location is the membrane. The protein resides in the nucleus. It participates in protein modification; protein ubiquitination. Essential protein. Negatively regulates the response to iron deficiency and thus contributes to iron homeostasis. Exhibits E3 ubiquitin-protein ligase activity in vitro. Plays a role in root growth, rhizosphere acidification, and iron reductase activity in response to iron deprivation. Facilitates 26S proteasome-mediated degradation of PYEL proteins in the absence of iron. The polypeptide is Zinc finger protein BRUTUS (Arabidopsis thaliana (Mouse-ear cress)).